Consider the following 343-residue polypeptide: Uroporphyrinogen decarboxylase (343 aa).

Residues 25-29 (RQAGR), Phe44, Asp75, Tyr150, Ser205, and His320 contribute to the substrate site.

This sequence belongs to the uroporphyrinogen decarboxylase family. Homodimer.

Its subcellular location is the cytoplasm. It carries out the reaction uroporphyrinogen III + 4 H(+) = coproporphyrinogen III + 4 CO2. The protein operates within porphyrin-containing compound metabolism; protoporphyrin-IX biosynthesis; coproporphyrinogen-III from 5-aminolevulinate: step 4/4. In terms of biological role, catalyzes the decarboxylation of four acetate groups of uroporphyrinogen-III to yield coproporphyrinogen-III. The protein is Uroporphyrinogen decarboxylase of Mesorhizobium japonicum (strain LMG 29417 / CECT 9101 / MAFF 303099) (Mesorhizobium loti (strain MAFF 303099)).